A 192-amino-acid chain; its full sequence is UPF0312 protein YPK_1931 (192 aa).

The first 23 residues, 1 to 23 (MINKTLLGLSLGALMFTAGSAVA), serve as a signal peptide directing secretion.

Belongs to the UPF0312 family. Type 1 subfamily.

The protein resides in the periplasm. The chain is UPF0312 protein YPK_1931 from Yersinia pseudotuberculosis serotype O:3 (strain YPIII).